We begin with the raw amino-acid sequence, 667 residues long: UvrABC system protein B (667 aa).

The Helicase ATP-binding domain maps to 24-195; that stretch reads EGLRRGDRFQ…SSGGVFHLRG (172 aa). 37 to 44 is a binding site for ATP; that stretch reads GVTGSGKT. The Beta-hairpin motif lies at 90–113; the sequence is YYDYYQPEAYIPTKDLYIEKDADI. One can recognise a Helicase C-terminal domain in the interval 428–581; that stretch reads QVDDFIEEVQ…QLMYNIEHDI (154 aa). Residues 626–661 enclose the UVR domain; sequence EEYLALLEEEMWRASSELRYEDAAMLRDEMLRIKRE.

It belongs to the UvrB family. Forms a heterotetramer with UvrA during the search for lesions. Interacts with UvrC in an incision complex.

Its subcellular location is the cytoplasm. Functionally, the UvrABC repair system catalyzes the recognition and processing of DNA lesions. A damage recognition complex composed of 2 UvrA and 2 UvrB subunits scans DNA for abnormalities. Upon binding of the UvrA(2)B(2) complex to a putative damaged site, the DNA wraps around one UvrB monomer. DNA wrap is dependent on ATP binding by UvrB and probably causes local melting of the DNA helix, facilitating insertion of UvrB beta-hairpin between the DNA strands. Then UvrB probes one DNA strand for the presence of a lesion. If a lesion is found the UvrA subunits dissociate and the UvrB-DNA preincision complex is formed. This complex is subsequently bound by UvrC and the second UvrB is released. If no lesion is found, the DNA wraps around the other UvrB subunit that will check the other stand for damage. This is UvrABC system protein B from Kosmotoga olearia (strain ATCC BAA-1733 / DSM 21960 / TBF 19.5.1).